We begin with the raw amino-acid sequence, 437 residues long: Transcription factor E2F1 (437 aa).

Disordered regions lie at residues 42 to 87 (ASAP…GRPP) and 101 to 128 (LAES…KSRY). The cyclin A:CDK2 binding stretch occupies residues 67–108 (ATPQAPRPTPSAPRPALGRPPVKRRLDLETDHQYLAESSGPA). The interval 89–191 (KRRLDLETDH…KKSKNHIQWL (103 aa)) is interaction with BIRC2/c-IAP1. Residues 110–194 (GRGRHPGKGV…KNHIQWLGSH (85 aa)) mediate DNA binding. N6-acetyllysine occurs at positions 117, 120, and 125. Positions 153 to 174 (LNWAAEVLKVQKRRIYDITNVL) are leucine-zipper. The short motif at 158-194 (EVLKVQKRRIYDITNVLEGIQLIAKKSKNHIQWLGSH) is the DEF box element. Lys185 carries the N6-methyllysine; by SETD7 modification. A required for interaction with TRIM28 region spans residues 192-382 (GSHTTVGVGG…RLSPLVAADS (191 aa)). Residues 195-284 (TTVGVGGRLE…AVDSSENFQI (90 aa)) are dimerization. The interval 300-349 (EETVGGISPGKTPSQEVTSEEENRATDSATIVSPPPSSPPSSLTTDPSQS) is disordered. Over residues 339 to 349 (PSSLTTDPSQS) the composition is skewed to low complexity. Phosphoserine; by CHEK2 is present on Ser364. Residues 368–437 (PVDEDRLSPL…DFGDLTPLDF (70 aa)) are transactivation. Ser375 is modified (phosphoserine). Position 403 is a phosphoserine; by GSK3-beta (Ser403). The tract at residues 409-426 (LDYHFGLEEGEGIRDLFD) is RB1 binding. Thr433 carries the post-translational modification Phosphothreonine; by GSK3-beta.

The protein belongs to the E2F/DP family. In terms of assembly, component of the DRTF1/E2F transcription factor complex. Forms heterodimers with DP family members. The E2F1 complex binds specifically hypophosphorylated RB1, the interaction represses E2F1-driven transcription. During the cell cycle, RB1 becomes phosphorylated in mid-to-late G1 phase, detaches from the DRTF1/E2F complex, rendering E2F transcriptionally active. Viral oncoproteins, notably E1A, T-antigen and HPV E7, are capable of sequestering RB1, thus releasing the active complex. Interacts with TRRAP, which probably mediates its interaction with histone acetyltransferase complexes, leading to transcription activation. Binds TOPBP1 and EAPP. Interacts with ARID3A. Interacts with TRIM28; the interaction inhibits E2F1 acetylation through recruiting HDAC1 and represses its transcriptional activity. Interaction with KAT2B; the interaction acetylates E2F1 enhancing its DNA-binding and transcriptional activity. Interacts with BIRC2/c-IAP1 (via BIR domains). The complex TFDP1:E2F1 interacts with CEBPA; the interaction prevents CEBPA binding to target genes promoters and represses its transcriptional activity. Interacts with RRP1B. Interacts with HCFC1. Interacts with KMT2E; the interaction is probably indirect and is mediated via HCFC1. Interacts with DCAF5 and L3MBTL3; the interaction requires methylation at Lys-185 and is necessary to target E2F1 for ubiquitination by the CRL4-DCAF5 E3 ubiquitin ligase complex. As to quaternary structure, (Microbial infection) Interacts with human cytomegalovirus/HHV-5 protein UL123. Phosphorylated by CDK2 and cyclin A-CDK2 in the S-phase. Phosphorylation at Ser-364 by CHEK2 stabilizes E2F1 upon DNA damage and regulates its effect on transcription and apoptosis. Phosphorylation at Ser-403 by GSK3B promotes interaction with USP11, leading to its deubiquitination and stabilization. In terms of processing, ubiquitinated via 'Lys-63'-linked ubiquitin, leading to its degradation. Deubiquitinated by USP11 following phosphorylation by GSK3B, promoting its stability. Post-translationally, acetylation stimulates DNA-binding. Enhanced under stress conditions such as DNA damage and inhibited by retinoblastoma protein RB1. Regulated by KAP1/TRIM28 which recruits HDAC1 to E2F1 resulting in deacetylation. Acetylated by P/CAF/KAT2B. Methylation at Lys-185 by SETD7 promotes E2F1 ubiquitin-dependent proteasomal degradation.

It localises to the nucleus. BIRC2/c-IAP1 stimulates its transcriptional activity. Transcription activator that binds DNA cooperatively with DP proteins through the E2 recognition site, 5'-TTTC[CG]CGC-3' found in the promoter region of a number of genes whose products are involved in cell cycle regulation or in DNA replication. The DRTF1/E2F complex functions in the control of cell-cycle progression from G1 to S phase. E2F1 binds preferentially RB1 in a cell-cycle dependent manner. It can mediate both cell proliferation and TP53/p53-dependent apoptosis. Blocks adipocyte differentiation by binding to specific promoters repressing CEBPA binding to its target gene promoters. Directly activates transcription of PEG10. Positively regulates transcription of RRP1B. This is Transcription factor E2F1 from Homo sapiens (Human).